A 316-amino-acid chain; its full sequence is Ribosomal RNA small subunit methyltransferase H (316 aa).

S-adenosyl-L-methionine is bound by residues 42-44 (GGH), Asp62, Phe86, Asp104, and Gln111.

This sequence belongs to the methyltransferase superfamily. RsmH family.

Its subcellular location is the cytoplasm. It carries out the reaction cytidine(1402) in 16S rRNA + S-adenosyl-L-methionine = N(4)-methylcytidine(1402) in 16S rRNA + S-adenosyl-L-homocysteine + H(+). Functionally, specifically methylates the N4 position of cytidine in position 1402 (C1402) of 16S rRNA. This chain is Ribosomal RNA small subunit methyltransferase H, found in Polynucleobacter necessarius subsp. necessarius (strain STIR1).